The chain runs to 118 residues: Large ribosomal subunit protein bL19 (118 aa).

Belongs to the bacterial ribosomal protein bL19 family.

In terms of biological role, this protein is located at the 30S-50S ribosomal subunit interface and may play a role in the structure and function of the aminoacyl-tRNA binding site. This Campylobacter fetus subsp. fetus (strain 82-40) protein is Large ribosomal subunit protein bL19.